The primary structure comprises 121 residues: Large ribosomal subunit protein bL12 (121 aa).

It belongs to the bacterial ribosomal protein bL12 family. Homodimer. Part of the ribosomal stalk of the 50S ribosomal subunit. Forms a multimeric L10(L12)X complex, where L10 forms an elongated spine to which 2 to 4 L12 dimers bind in a sequential fashion. Binds GTP-bound translation factors.

Its function is as follows. Forms part of the ribosomal stalk which helps the ribosome interact with GTP-bound translation factors. Is thus essential for accurate translation. The polypeptide is Large ribosomal subunit protein bL12 (Ureaplasma urealyticum serovar 10 (strain ATCC 33699 / Western)).